The sequence spans 877 residues: Alanine--tRNA ligase (877 aa).

Zn(2+) contacts are provided by histidine 563, histidine 567, cysteine 665, and histidine 669.

Belongs to the class-II aminoacyl-tRNA synthetase family. Requires Zn(2+) as cofactor.

It is found in the cytoplasm. The catalysed reaction is tRNA(Ala) + L-alanine + ATP = L-alanyl-tRNA(Ala) + AMP + diphosphate. Functionally, catalyzes the attachment of alanine to tRNA(Ala) in a two-step reaction: alanine is first activated by ATP to form Ala-AMP and then transferred to the acceptor end of tRNA(Ala). Also edits incorrectly charged Ser-tRNA(Ala) and Gly-tRNA(Ala) via its editing domain. This is Alanine--tRNA ligase from Thermoanaerobacter pseudethanolicus (strain ATCC 33223 / 39E) (Clostridium thermohydrosulfuricum).